A 477-amino-acid polypeptide reads, in one-letter code: Protoporphyrinogen oxidase (477 aa).

FAD is bound by residues 9–14 (GGGISG), Trp42, 57–60 (GPRG), Val257, Ala449, and 454–456 (VAV).

It belongs to the protoporphyrinogen/coproporphyrinogen oxidase family. Protoporphyrinogen oxidase subfamily. Monomer. Homodimer. The cofactor is FAD.

The protein resides in the mitochondrion inner membrane. It catalyses the reaction protoporphyrinogen IX + 3 O2 = protoporphyrin IX + 3 H2O2. Its pathway is porphyrin-containing compound metabolism; protoporphyrin-IX biosynthesis; protoporphyrin-IX from protoporphyrinogen-IX: step 1/1. In terms of biological role, catalyzes the 6-electron oxidation of protoporphyrinogen-IX to form protoporphyrin-IX. In Macaca fascicularis (Crab-eating macaque), this protein is Protoporphyrinogen oxidase (PPOX).